A 110-amino-acid polypeptide reads, in one-letter code: NADH-quinone oxidoreductase subunit K (110 aa).

Helical transmembrane passes span 7–27 (LGSY…GVFV), 31–51 (IIAI…NFIA), and 73–93 (IFVI…VIAI).

This sequence belongs to the complex I subunit 4L family. NDH-1 is composed of 14 different subunits. Subunits NuoA, H, J, K, L, M, N constitute the membrane sector of the complex.

Its subcellular location is the cell membrane. The catalysed reaction is a quinone + NADH + 5 H(+)(in) = a quinol + NAD(+) + 4 H(+)(out). NDH-1 shuttles electrons from NADH, via FMN and iron-sulfur (Fe-S) centers, to quinones in the respiratory chain. The immediate electron acceptor for the enzyme in this species is believed to be a menaquinone. Couples the redox reaction to proton translocation (for every two electrons transferred, four hydrogen ions are translocated across the cytoplasmic membrane), and thus conserves the redox energy in a proton gradient. The polypeptide is NADH-quinone oxidoreductase subunit K (Desulfitobacterium hafniense (strain DSM 10664 / DCB-2)).